A 336-amino-acid chain; its full sequence is Dihydrolipoyl dehydrogenase (336 aa).

Residues 34 to 42 (EKEVVGGIC), lysine 51, and glycine 115 contribute to the FAD site. Cysteine 42 and cysteine 47 form a disulfide bridge. Residues 180–184 (GGGVI), glutamate 203, valine 237, and 264–267 (SVGT) each bind NAD(+). Aspartate 304 and alanine 312 together coordinate FAD.

This sequence belongs to the class-I pyridine nucleotide-disulfide oxidoreductase family. As to quaternary structure, homodimer. Requires FAD as cofactor.

It localises to the cytoplasm. It catalyses the reaction N(6)-[(R)-dihydrolipoyl]-L-lysyl-[protein] + NAD(+) = N(6)-[(R)-lipoyl]-L-lysyl-[protein] + NADH + H(+). Functionally, lipoamide dehydrogenase is a component of the alpha-ketoacid dehydrogenase complexes. This chain is Dihydrolipoyl dehydrogenase (pdhD), found in Acholeplasma laidlawii.